Reading from the N-terminus, the 70-residue chain is Putative ankyrin repeat protein RC0502 (70 aa).

The stretch at 9–43 is one ANK repeat; sequence KGRIPIHYATYSKQHEITQILILLQPGSEIDTVDN.

This chain is Putative ankyrin repeat protein RC0502, found in Rickettsia conorii (strain ATCC VR-613 / Malish 7).